Consider the following 130-residue polypeptide: Small ribosomal subunit protein uS8 (130 aa).

The protein belongs to the universal ribosomal protein uS8 family. In terms of assembly, part of the 30S ribosomal subunit.

One of the primary rRNA binding proteins, it binds directly to 16S rRNA central domain where it helps coordinate assembly of the platform of the 30S subunit. In Methanocaldococcus jannaschii (strain ATCC 43067 / DSM 2661 / JAL-1 / JCM 10045 / NBRC 100440) (Methanococcus jannaschii), this protein is Small ribosomal subunit protein uS8 (rps8).